Reading from the N-terminus, the 332-residue chain is Ribosomal RNA small subunit methyltransferase H (332 aa).

S-adenosyl-L-methionine-binding positions include glycine 39–tyrosine 41, aspartate 56, phenylalanine 83, aspartate 100, and glutamine 107.

This sequence belongs to the methyltransferase superfamily. RsmH family.

It localises to the cytoplasm. It catalyses the reaction cytidine(1402) in 16S rRNA + S-adenosyl-L-methionine = N(4)-methylcytidine(1402) in 16S rRNA + S-adenosyl-L-homocysteine + H(+). In terms of biological role, specifically methylates the N4 position of cytidine in position 1402 (C1402) of 16S rRNA. The protein is Ribosomal RNA small subunit methyltransferase H of Bartonella grahamii (strain as4aup).